Consider the following 467-residue polypeptide: Uronate isomerase (467 aa).

Belongs to the metallo-dependent hydrolases superfamily. Uronate isomerase family.

The enzyme catalyses D-glucuronate = D-fructuronate. It carries out the reaction aldehydo-D-galacturonate = keto-D-tagaturonate. It participates in carbohydrate metabolism; pentose and glucuronate interconversion. The sequence is that of Uronate isomerase from Haemophilus influenzae (strain 86-028NP).